The chain runs to 211 residues: Thiamine-phosphate synthase (211 aa).

Residues 37-41 and asparagine 69 each bind 4-amino-2-methyl-5-(diphosphooxymethyl)pyrimidine; that span reads QLRIK. Mg(2+) is bound by residues aspartate 70 and aspartate 89. Residue serine 108 participates in 4-amino-2-methyl-5-(diphosphooxymethyl)pyrimidine binding. 134-136 is a binding site for 2-[(2R,5Z)-2-carboxy-4-methylthiazol-5(2H)-ylidene]ethyl phosphate; it reads TQT. Lysine 137 is a binding site for 4-amino-2-methyl-5-(diphosphooxymethyl)pyrimidine. Residues glycine 166 and 186 to 187 contribute to the 2-[(2R,5Z)-2-carboxy-4-methylthiazol-5(2H)-ylidene]ethyl phosphate site; that span reads VS.

Belongs to the thiamine-phosphate synthase family. Mg(2+) is required as a cofactor.

The enzyme catalyses 2-[(2R,5Z)-2-carboxy-4-methylthiazol-5(2H)-ylidene]ethyl phosphate + 4-amino-2-methyl-5-(diphosphooxymethyl)pyrimidine + 2 H(+) = thiamine phosphate + CO2 + diphosphate. It carries out the reaction 2-(2-carboxy-4-methylthiazol-5-yl)ethyl phosphate + 4-amino-2-methyl-5-(diphosphooxymethyl)pyrimidine + 2 H(+) = thiamine phosphate + CO2 + diphosphate. It catalyses the reaction 4-methyl-5-(2-phosphooxyethyl)-thiazole + 4-amino-2-methyl-5-(diphosphooxymethyl)pyrimidine + H(+) = thiamine phosphate + diphosphate. Its pathway is cofactor biosynthesis; thiamine diphosphate biosynthesis; thiamine phosphate from 4-amino-2-methyl-5-diphosphomethylpyrimidine and 4-methyl-5-(2-phosphoethyl)-thiazole: step 1/1. Its function is as follows. Condenses 4-methyl-5-(beta-hydroxyethyl)thiazole monophosphate (THZ-P) and 2-methyl-4-amino-5-hydroxymethyl pyrimidine pyrophosphate (HMP-PP) to form thiamine monophosphate (TMP). The polypeptide is Thiamine-phosphate synthase (Enterobacter sp. (strain 638)).